The following is a 497-amino-acid chain: Tripartite motif-containing protein 5 (497 aa).

Alanine 2 is modified (N-acetylalanine). An RING-type zinc finger spans residues 15 to 60 (CPICLELLTEPLSLPCGHSFCQACITANHRKSMLYKEGERSCPVCR). Serine 87 bears the Phosphoserine mark. A B box-type zinc finger spans residues 92-133 (LKVDHCARHGEKLLLFCQEDSKVICWLCERSQEHRGHHTFLM). Zn(2+) contacts are provided by cysteine 97, histidine 100, cysteine 119, and histidine 125. The stretch at 137–225 (AQEYHVKLQT…LTKSETEMVQ (89 aa)) forms a coiled coil. Residues 187–200 (FEQLREILDWEESN) form a required for interaction with GABARAP and for autophagy region. The B30.2/SPRY domain occupies 283–497 (LKGMLDMFRE…VPMTLCSPSS (215 aa)).

This sequence belongs to the TRIM/RBCC family. Can form homodimers and homotrimers. In addition to lower-order dimerization, also exhibits a higher-order multimerization and both low- and high-order multimerizations are essential for its restriction activity. Interacts with BTBD1 and BTBD2. Interacts with PSMC4, PSMC5, PSMD7 and HSPA8/HSC70. Interacts (via B30.2/SPRY domain) with HSPA1A/B. Interacts with PSMC2, MAP3K7/TAK1, TAB2 and TAB3. Interacts with SQSTM1. Interacts with TRIM6 and TRIM34. Interacts with ULK1 (phosphorylated form), GABARAP, GABARAPL1, GABARAPL2, MAP1LC3A, MAP1LC3C and BECN1. Degraded in a proteasome-independent fashion in the absence of viral infection but in a proteasome-dependent fashion following exposure to restriction sensitive virus. Post-translationally, autoubiquitinated in a RING finger- and UBE2D2-dependent manner. Monoubiquitinated by TRIM21. Deubiquitinated by Yersinia YopJ. Ubiquitination may not lead to proteasomal degradation.

It localises to the cytoplasm. Its subcellular location is the nucleus. The enzyme catalyses S-ubiquitinyl-[E2 ubiquitin-conjugating enzyme]-L-cysteine + [acceptor protein]-L-lysine = [E2 ubiquitin-conjugating enzyme]-L-cysteine + N(6)-ubiquitinyl-[acceptor protein]-L-lysine.. The protein operates within protein modification; protein ubiquitination. In terms of biological role, capsid-specific restriction factor that prevents infection from non-host-adapted retroviruses. Blocks viral replication early in the life cycle, after viral entry but before reverse transcription. In addition to acting as a capsid-specific restriction factor, also acts as a pattern recognition receptor that activates innate immune signaling in response to the retroviral capsid lattice. Binding to the viral capsid triggers its E3 ubiquitin ligase activity, and in concert with the heterodimeric ubiquitin conjugating enzyme complex UBE2V1-UBE2N (also known as UBC13-UEV1A complex) generates 'Lys-63'-linked polyubiquitin chains, which in turn are catalysts in the autophosphorylation of the MAP3K7/TAK1 complex (includes TAK1, TAB2, and TAB3). Activation of the MAP3K7/TAK1 complex by autophosphorylation results in the induction and expression of NF-kappa-B and MAPK-responsive inflammatory genes, thereby leading to an innate immune response in the infected cell. Plays a role in regulating autophagy through activation of autophagy regulator BECN1 by causing its dissociation from its inhibitors BCL2 and TAB2. This is Tripartite motif-containing protein 5 (TRIM5) from Papio anubis (Olive baboon).